The sequence spans 151 residues: MGSDDQSAGDRIQKGFQINYMILRDADSGKIIWQENKDFSAPDHEHEARVPVKILDMRAVSREINFSTIESMENFRLDQKVLFKGRIMEEWFFEMGFVGANTTNTWQSTIEAAPESQMMPAKVLNGNVTIQTSFYDNETLITKSVVRLYYI.

It belongs to the PDE6D/unc-119 family. In terms of assembly, interacts with Pde6.

It is found in the nucleus. It localises to the cytoplasm. In Drosophila sechellia (Fruit fly), this protein is Probable cGMP 3',5'-cyclic phosphodiesterase subunit delta.